We begin with the raw amino-acid sequence, 152 residues long: Deoxyuridine 5'-triphosphate nucleotidohydrolase (152 aa).

Residues 71-73 (RSG), Asn-84, 88-90 (LID), and Met-98 each bind substrate.

Belongs to the dUTPase family. It depends on Mg(2+) as a cofactor.

The enzyme catalyses dUTP + H2O = dUMP + diphosphate + H(+). The protein operates within pyrimidine metabolism; dUMP biosynthesis; dUMP from dCTP (dUTP route): step 2/2. In terms of biological role, this enzyme is involved in nucleotide metabolism: it produces dUMP, the immediate precursor of thymidine nucleotides and it decreases the intracellular concentration of dUTP so that uracil cannot be incorporated into DNA. This Photorhabdus laumondii subsp. laumondii (strain DSM 15139 / CIP 105565 / TT01) (Photorhabdus luminescens subsp. laumondii) protein is Deoxyuridine 5'-triphosphate nucleotidohydrolase.